The following is a 165-amino-acid chain: Protein SprT (165 aa).

Residues 20-163 (EKLAQANLKL…RCVHCGEQLV (144 aa)) form the SprT-like domain. Zn(2+) is bound at residue His78. Glu79 is an active-site residue. Residue His82 coordinates Zn(2+).

It belongs to the SprT family. Zn(2+) is required as a cofactor.

Its subcellular location is the cytoplasm. The sequence is that of Protein SprT from Shigella flexneri serotype 5b (strain 8401).